The following is a 267-amino-acid chain: MTSKDEAKSSASSVEERRRNALDLLPPPANSNKPLTPFSIEDILNKPSVRRSYTICGTAHLLSSADKPPAAGLPLSSRALLSQTSPLCALEELASKTFKGLEVSVLQAAEGRDGMTIFGQRQTPKKRRKSRTAFTNHQIYELEKRFLYQKYLSPADRDQIAQQLGLTNAQVITWFQNRRAKLKRDLEEMKADVESTKKMSPSAVEAVLTISELEESGSERGNSRSRSPQLGLTSNHMPLSPSXPLTDQHASKECSEDEEDVEIDVDD.

The segment covering 1-21 has biased composition (basic and acidic residues); the sequence is MTSKDEAKSSASSVEERRRNA. The interval 1–36 is disordered; it reads MTSKDEAKSSASSVEERRRNALDLLPPPANSNKPLT. The segment at residues 127–186 is a DNA-binding region (homeobox); the sequence is RRKSRTAFTNHQIYELEKRFLYQKYLSPADRDQIAQQLGLTNAQVITWFQNRRAKLKRDL. The interval 211-267 is disordered; that stretch reads SELEESGSERGNSRSRSPQLGLTSNHMPLSPSXPLTDQHASKECSEDEEDVEIDVDD. Over residues 228 to 237 the composition is skewed to polar residues; the sequence is PQLGLTSNHM. Residues 255–267 show a composition bias toward acidic residues; the sequence is SEDEEDVEIDVDD.

As to expression, expressed in all myoblasts that will populate body wall muscles as well as in a group of cells the migrate into the head.

The protein localises to the nucleus. In terms of biological role, transcription factor that controls hypaxial muscle development by down-regulating myod1 and cdkn1b/p27, thereby allowing myoblasts to proliferate before the onset of terminal differentiation. This chain is Transcription factor LBX1, found in Xenopus laevis (African clawed frog).